The primary structure comprises 766 residues: Subtilisin-like protease SBT3.13 (766 aa).

The first 21 residues, 1-21 (MNNSLQSSKLVLLLAIALVLF), serve as a signal peptide directing secretion. Residues 22–120 (LNTELDFLTA…VIPNRIRKLK (99 aa)) constitute a propeptide, activation peptide. Residues 41–119 (VYIVYLGERE…HVIPNRIRKL (79 aa)) enclose the Inhibitor I9 domain. In terms of domain architecture, Peptidase S8 spans 134–618 (PTSFSSLSSV…GGLVNPEKAA (485 aa)). Asp-162 acts as the Charge relay system in catalysis. 2 N-linked (GlcNAc...) asparagine glycosylation sites follow: Asn-195 and Asn-223. The Charge relay system role is filled by His-239. N-linked (GlcNAc...) asparagine glycans are attached at residues Asn-254 and Asn-389. Ser-549 serves as the catalytic Charge relay system. A glycan (N-linked (GlcNAc...) asparagine) is linked at Asn-641.

This sequence belongs to the peptidase S8 family.

The protein resides in the secreted. The protein is Subtilisin-like protease SBT3.13 of Arabidopsis thaliana (Mouse-ear cress).